The chain runs to 338 residues: Biotin synthase (338 aa).

A Radical SAM core domain is found at 59-284 (EEVEIEGIVS…RTTLRFAGGR (226 aa)). Residues C74, C78, and C81 each contribute to the [4Fe-4S] cluster site. [2Fe-2S] cluster is bound by residues C117, C209, and R279.

Belongs to the radical SAM superfamily. Biotin synthase family. In terms of assembly, homodimer. [4Fe-4S] cluster serves as cofactor. It depends on [2Fe-2S] cluster as a cofactor.

It catalyses the reaction (4R,5S)-dethiobiotin + (sulfur carrier)-SH + 2 reduced [2Fe-2S]-[ferredoxin] + 2 S-adenosyl-L-methionine = (sulfur carrier)-H + biotin + 2 5'-deoxyadenosine + 2 L-methionine + 2 oxidized [2Fe-2S]-[ferredoxin]. It functions in the pathway cofactor biosynthesis; biotin biosynthesis; biotin from 7,8-diaminononanoate: step 2/2. In terms of biological role, catalyzes the conversion of dethiobiotin (DTB) to biotin by the insertion of a sulfur atom into dethiobiotin via a radical-based mechanism. This chain is Biotin synthase, found in Corynebacterium urealyticum (strain ATCC 43042 / DSM 7109).